The primary structure comprises 287 residues: Glutamate racemase (287 aa).

Substrate is bound by residues 32–33 (DS) and 64–65 (YG). Cysteine 96 serves as the catalytic Proton donor/acceptor. 97-98 (NT) contacts substrate. The active-site Proton donor/acceptor is the cysteine 208. A substrate-binding site is contributed by 209–210 (TH).

It belongs to the aspartate/glutamate racemases family.

The catalysed reaction is L-glutamate = D-glutamate. It functions in the pathway cell wall biogenesis; peptidoglycan biosynthesis. Functionally, provides the (R)-glutamate required for cell wall biosynthesis. The protein is Glutamate racemase of Serratia proteamaculans (strain 568).